A 209-amino-acid chain; its full sequence is Uracil phosphoribosyltransferase (209 aa).

5-phospho-alpha-D-ribose 1-diphosphate is bound by residues Arg-79, Arg-104, and 131–139 (DPMLATGGS). Uracil contacts are provided by residues Ile-194 and 199-201 (GDA). Asp-200 contributes to the 5-phospho-alpha-D-ribose 1-diphosphate binding site.

The protein belongs to the UPRTase family. The cofactor is Mg(2+).

The enzyme catalyses UMP + diphosphate = 5-phospho-alpha-D-ribose 1-diphosphate + uracil. The protein operates within pyrimidine metabolism; UMP biosynthesis via salvage pathway; UMP from uracil: step 1/1. Allosterically activated by GTP. In terms of biological role, catalyzes the conversion of uracil and 5-phospho-alpha-D-ribose 1-diphosphate (PRPP) to UMP and diphosphate. This is Uracil phosphoribosyltransferase from Clostridium novyi (strain NT).